We begin with the raw amino-acid sequence, 92 residues long: Small ribosomal subunit protein uS19c (92 aa).

This sequence belongs to the universal ribosomal protein uS19 family.

It is found in the plastid. Its subcellular location is the chloroplast. Functionally, protein S19 forms a complex with S13 that binds strongly to the 16S ribosomal RNA. The protein is Small ribosomal subunit protein uS19c of Platanus occidentalis (Sycamore).